Consider the following 127-residue polypeptide: NADPH-dependent 7-cyano-7-deazaguanine reductase (127 aa).

The Thioimide intermediate role is filled by Cys40. Asp47 serves as the catalytic Proton donor. Residues 62 to 64 (VEL) and 81 to 82 (HE) contribute to the substrate site.

Belongs to the GTP cyclohydrolase I family. QueF type 1 subfamily.

The protein resides in the cytoplasm. It carries out the reaction 7-aminomethyl-7-carbaguanine + 2 NADP(+) = 7-cyano-7-deazaguanine + 2 NADPH + 3 H(+). It functions in the pathway tRNA modification; tRNA-queuosine biosynthesis. Catalyzes the NADPH-dependent reduction of 7-cyano-7-deazaguanine (preQ0) to 7-aminomethyl-7-deazaguanine (preQ1). This Campylobacter jejuni subsp. jejuni serotype O:6 (strain 81116 / NCTC 11828) protein is NADPH-dependent 7-cyano-7-deazaguanine reductase.